Consider the following 343-residue polypeptide: L-threonine 3-dehydrogenase (343 aa).

Cys40 is a Zn(2+) binding site. Residues Thr42 and His45 each act as charge relay system in the active site. Residues His65, Glu66, Cys95, Cys98, Cys101, and Cys109 each contribute to the Zn(2+) site. Residues Ile177, Asp197, Arg202, 264–266 (LGI), and 288–289 (IY) each bind NAD(+).

This sequence belongs to the zinc-containing alcohol dehydrogenase family. As to quaternary structure, homotetramer. Requires Zn(2+) as cofactor.

Its subcellular location is the cytoplasm. It catalyses the reaction L-threonine + NAD(+) = (2S)-2-amino-3-oxobutanoate + NADH + H(+). The protein operates within amino-acid degradation; L-threonine degradation via oxydo-reductase pathway; glycine from L-threonine: step 1/2. In terms of biological role, catalyzes the NAD(+)-dependent oxidation of L-threonine to 2-amino-3-ketobutyrate. This Vibrio parahaemolyticus serotype O3:K6 (strain RIMD 2210633) protein is L-threonine 3-dehydrogenase.